Consider the following 398-residue polypeptide: 1-deoxy-D-xylulose 5-phosphate reductoisomerase (398 aa).

NADPH contacts are provided by Thr-10, Gly-11, Ser-12, Ile-13, and Asn-124. Lys-125 is a 1-deoxy-D-xylulose 5-phosphate binding site. Glu-126 contacts NADPH. Asp-150 provides a ligand contact to Mn(2+). Positions 151, 152, 186, and 209 each coordinate 1-deoxy-D-xylulose 5-phosphate. Glu-152 is a Mn(2+) binding site. Gly-215 lines the NADPH pocket. Residues Ser-222, Asn-227, Lys-228, and Glu-231 each coordinate 1-deoxy-D-xylulose 5-phosphate. Glu-231 contributes to the Mn(2+) binding site.

The protein belongs to the DXR family. It depends on Mg(2+) as a cofactor. Mn(2+) serves as cofactor.

The enzyme catalyses 2-C-methyl-D-erythritol 4-phosphate + NADP(+) = 1-deoxy-D-xylulose 5-phosphate + NADPH + H(+). It functions in the pathway isoprenoid biosynthesis; isopentenyl diphosphate biosynthesis via DXP pathway; isopentenyl diphosphate from 1-deoxy-D-xylulose 5-phosphate: step 1/6. In terms of biological role, catalyzes the NADPH-dependent rearrangement and reduction of 1-deoxy-D-xylulose-5-phosphate (DXP) to 2-C-methyl-D-erythritol 4-phosphate (MEP). The polypeptide is 1-deoxy-D-xylulose 5-phosphate reductoisomerase (Tolumonas auensis (strain DSM 9187 / NBRC 110442 / TA 4)).